The following is a 198-amino-acid chain: Recombination protein RecR (198 aa).

Residues Cys-57–Cys-72 form a C4-type zinc finger. The Toprim domain maps to Asn-80 to Pro-175.

This sequence belongs to the RecR family.

Functionally, may play a role in DNA repair. It seems to be involved in an RecBC-independent recombinational process of DNA repair. It may act with RecF and RecO. The chain is Recombination protein RecR from Endomicrobium trichonymphae.